The chain runs to 89 residues: UPF0213 protein LSEI_1587 (89 aa).

Residues 4–79 (KTYYFYVLLC…KHQTRHRKEV (76 aa)) form the GIY-YIG domain.

This sequence belongs to the UPF0213 family.

The sequence is that of UPF0213 protein LSEI_1587 from Lacticaseibacillus paracasei (strain ATCC 334 / BCRC 17002 / CCUG 31169 / CIP 107868 / KCTC 3260 / NRRL B-441) (Lactobacillus paracasei).